Here is a 208-residue protein sequence, read N- to C-terminus: Large ribosomal subunit protein uL3 (208 aa).

The interval 123-147 (RHGQSRGPMAHGSRYHRRPGSMGPV) is disordered.

The protein belongs to the universal ribosomal protein uL3 family. As to quaternary structure, part of the 50S ribosomal subunit. Forms a cluster with proteins L14 and L19.

In terms of biological role, one of the primary rRNA binding proteins, it binds directly near the 3'-end of the 23S rRNA, where it nucleates assembly of the 50S subunit. The chain is Large ribosomal subunit protein uL3 from Streptococcus sanguinis (strain SK36).